A 264-amino-acid chain; its full sequence is uncharacterized protein (264 aa).

Position 8–15 (8–15) interacts with ATP; it reads IQGGTGKT.

This is an uncharacterized protein from Methanocaldococcus jannaschii (strain ATCC 43067 / DSM 2661 / JAL-1 / JCM 10045 / NBRC 100440) (Methanococcus jannaschii).